The primary structure comprises 67 residues: Small ribosomal subunit protein eS27 (67 aa).

Zn(2+) contacts are provided by Cys22, Cys25, Cys41, and Cys44. The C4-type zinc finger occupies 22-44 (CPDCGNEQVVFSHAAMVVRCLVC).

It belongs to the eukaryotic ribosomal protein eS27 family. As to quaternary structure, part of the 30S ribosomal subunit. Zn(2+) is required as a cofactor.

This Pyrobaculum islandicum (strain DSM 4184 / JCM 9189 / GEO3) protein is Small ribosomal subunit protein eS27.